The following is a 119-amino-acid chain: Dihydroneopterin aldolase (119 aa).

Substrate contacts are provided by residues glutamate 21, tyrosine 53, and 72–73 (IE). Catalysis depends on lysine 99, which acts as the Proton donor/acceptor.

Belongs to the DHNA family.

The enzyme catalyses 7,8-dihydroneopterin = 6-hydroxymethyl-7,8-dihydropterin + glycolaldehyde. It participates in cofactor biosynthesis; tetrahydrofolate biosynthesis; 2-amino-4-hydroxy-6-hydroxymethyl-7,8-dihydropteridine diphosphate from 7,8-dihydroneopterin triphosphate: step 3/4. Its function is as follows. Catalyzes the conversion of 7,8-dihydroneopterin to 6-hydroxymethyl-7,8-dihydropterin. The sequence is that of Dihydroneopterin aldolase (folB) from Streptococcus pyogenes serotype M3 (strain ATCC BAA-595 / MGAS315).